The chain runs to 345 residues: uncharacterized protein (345 aa).

It belongs to the methyltransferase superfamily.

This is an uncharacterized protein from Streptomyces fradiae (Streptomyces roseoflavus).